Reading from the N-terminus, the 296-residue chain is F-box only protein 2 (296 aa).

The segment at 1–41 is disordered; sequence MDGDGDPESVGQPEEASPEEQPEEASAEEERPEDQQEEEAA. Acidic residues predominate over residues 16–40; sequence ASPEEQPEEASAEEERPEDQQEEEA. One can recognise an F-box domain in the interval 44–91; that stretch reads AAYLDELPEPLLLRVLAALPAAELVQACRLVCLRWKELVDGAPLWLLK. An FBA domain is found at 113 to 296; it reads FYFLSKRRRN…VTNSSVWVEP (184 aa). A carbohydrate-binding positions include 210–212 and 278–279; these read RSD and YW.

As to quaternary structure, component of the SCF(FBXO2) complex consisting of CUL1, RBX1, SKP1 and FBXO2. Predominantly detected as heterodimer with SKP1; the heterodimer with SKP1 is not part of the SCF(FBXO2) complex.

The protein localises to the cytoplasm. It localises to the microsome membrane. It functions in the pathway protein modification; protein ubiquitination. Functionally, substrate recognition component of a SCF (SKP1-CUL1-F-box protein) E3 ubiquitin-protein ligase complex that mediates the ubiquitination and subsequent proteasomal degradation of target proteins. Involved in the endoplasmic reticulum-associated degradation pathway (ERAD) for misfolded lumenal proteins by recognizing and binding sugar chains on unfolded glycoproteins that are retrotranslocated into the cytosol and promoting their ubiquitination and subsequent degradation. Prevents formation of cytosolic aggregates of unfolded glycoproteins that have been retrotranslocated into the cytosol. Able to recognize and bind denatured glycoproteins, preferentially those of the high-mannose type. This is F-box only protein 2 (FBXO2) from Homo sapiens (Human).